Consider the following 125-residue polypeptide: Small ribosomal subunit protein uS13 (125 aa).

A disordered region spans residues 95–125 (GLPLRGQRTKTNARTRKGKRKTVANKKIASK).

This sequence belongs to the universal ribosomal protein uS13 family. As to quaternary structure, part of the 30S ribosomal subunit. Forms a loose heterodimer with protein S19. Forms two bridges to the 50S subunit in the 70S ribosome.

Its function is as follows. Located at the top of the head of the 30S subunit, it contacts several helices of the 16S rRNA. In the 70S ribosome it contacts the 23S rRNA (bridge B1a) and protein L5 of the 50S subunit (bridge B1b), connecting the 2 subunits; these bridges are implicated in subunit movement. Contacts the tRNAs in the A and P-sites. This Borrelia garinii subsp. bavariensis (strain ATCC BAA-2496 / DSM 23469 / PBi) (Borreliella bavariensis) protein is Small ribosomal subunit protein uS13.